A 354-amino-acid chain; its full sequence is DNA polymerase IV (354 aa).

Positions 6–187 (IIHIDCDCFY…LPVARLHGVG (182 aa)) constitute a UmuC domain. Residues aspartate 10 and aspartate 105 each contribute to the Mg(2+) site. The active site involves glutamate 106.

Belongs to the DNA polymerase type-Y family. As to quaternary structure, monomer. The cofactor is Mg(2+).

It is found in the cytoplasm. It catalyses the reaction DNA(n) + a 2'-deoxyribonucleoside 5'-triphosphate = DNA(n+1) + diphosphate. Functionally, poorly processive, error-prone DNA polymerase involved in untargeted mutagenesis. Copies undamaged DNA at stalled replication forks, which arise in vivo from mismatched or misaligned primer ends. These misaligned primers can be extended by PolIV. Exhibits no 3'-5' exonuclease (proofreading) activity. May be involved in translesional synthesis, in conjunction with the beta clamp from PolIII. The sequence is that of DNA polymerase IV from Pseudomonas entomophila (strain L48).